The following is a 233-amino-acid chain: Zein-alpha PMS2 (233 aa).

The first 21 residues, 1–21 (MAAKIFCFLMLLGLSASVATA), serve as a signal peptide directing secretion.

Belongs to the zein family.

Its function is as follows. Zeins are major seed storage proteins. This chain is Zein-alpha PMS2 (ZMPMS2), found in Zea mays (Maize).